Reading from the N-terminus, the 275-residue chain is Pantothenate synthetase (275 aa).

26-33 is a binding site for ATP; the sequence is MGFLHEGH. H33 functions as the Proton donor in the catalytic mechanism. Q57 serves as a coordination point for (R)-pantoate. Q57 is a binding site for beta-alanine. 143-146 is an ATP binding site; sequence GQKD. Residue Q149 participates in (R)-pantoate binding. ATP-binding positions include A172 and 180-183; that span reads RSSR.

Belongs to the pantothenate synthetase family. As to quaternary structure, homodimer.

The protein localises to the cytoplasm. It carries out the reaction (R)-pantoate + beta-alanine + ATP = (R)-pantothenate + AMP + diphosphate + H(+). It participates in cofactor biosynthesis; (R)-pantothenate biosynthesis; (R)-pantothenate from (R)-pantoate and beta-alanine: step 1/1. Functionally, catalyzes the condensation of pantoate with beta-alanine in an ATP-dependent reaction via a pantoyl-adenylate intermediate. In Gluconobacter oxydans (strain 621H) (Gluconobacter suboxydans), this protein is Pantothenate synthetase.